The chain runs to 464 residues: MTVVSVEHALAGKLPEGGEVTVRGWVRTLRGSAGLAFINVTDGSCFAPIQVVANDTLPNFDEIKRLTSGCSLIAKGVLVKSQGKGQSFEIQASGVEIVGWVEDPLTYPIQPKPMTPEFLREVAHLRPRTNLFGAVTRIRNCLAQAVHRFFHQNGFNWISTPIITTSDAEGAGQMFRVSTLDMVNLPRDASGNVDFSRDFFGKETFLTVSGQLNVEAYCLALSKVYTFGPTFRAENSHTTRHLAEFWMIEPEIAFADLAEDARLAEQFLKYLFRAVLDERGDDLAFLAERVDKNAITKLEAFINAPFEQIDYTEAVKLLQNSGKKFDFPVEWGLDLQTEHERWLTEEHIGRPVVVTNYPEHIKAFYMRLNDDGKTVAAMDVLAPGIGEIIGGSQREERLDVLDARMAQFGLDKEHYSWYRDFRRYGSVPHAGFGLGFERLVVYVCGLSNIRDAIPYPRAPGSAEF.

Belongs to the class-II aminoacyl-tRNA synthetase family. Homodimer.

The protein resides in the cytoplasm. The enzyme catalyses tRNA(Asn) + L-asparagine + ATP = L-asparaginyl-tRNA(Asn) + AMP + diphosphate + H(+). The polypeptide is Asparagine--tRNA ligase (Xanthomonas euvesicatoria pv. vesicatoria (strain 85-10) (Xanthomonas campestris pv. vesicatoria)).